A 988-amino-acid chain; its full sequence is Band 4.1-like protein 2 (988 aa).

Residues 1–190 (MTTEVGSASE…GAAKRETKEV (190 aa)) are disordered. T2 carries the N-acetylthreonine modification. S7 carries the phosphoserine modification. Residues 22-31 (ASKEKAKEVE) show a composition bias toward basic and acidic residues. S38, S86, and S116 each carry phosphoserine. Composition is skewed to basic and acidic residues over residues 110 to 148 (ILGK…EAKP) and 160 to 190 (EEVR…TKEV). Phosphoserine occurs at positions 201, 379, 395, 492, 543, 555, 561, and 582. The region spanning 211-492 (VLAKVTLLDG…EHHTFYRLVS (282 aa)) is the FERM domain. Residues 495–651 (QPPKTKFLTL…TPEPRPSEWE (157 aa)) form a hydrophilic region. Residues 514–594 (TQAQTREAST…KATPLPAEGK (81 aa)) are disordered. A compositionally biased stretch (low complexity) spans 555–567 (SPPGEGSVPGPGV). Position 606 is a phosphotyrosine (Y606). Residues S610 and S630 each carry the phosphoserine modification. 2 disordered regions span residues 639–788 (MAST…QAGA) and 804–839 (QKLP…VPHL). Residues 652-837 (KRRVTPLPFQ…DPHRVNGEVP (186 aa)) form a spectrin--actin-binding region. A compositionally biased stretch (basic and acidic residues) spans 673-686 (VEEKKRAEVGKDES). Residue S698 is modified to Phosphoserine. Residues 704-717 (GETRKVEPVAHKDS) are compositionally biased toward basic and acidic residues. Over residues 718-729 (TSLSSESSSSSS) the composition is skewed to low complexity. Basic and acidic residues predominate over residues 739–751 (QPHHRVTEGTIRE). T745 carries the post-translational modification Phosphothreonine. Residues 752–764 (EQEECDEELEEEP) show a composition bias toward acidic residues. The segment covering 828–839 (DPHRVNGEVPHL) has biased composition (basic and acidic residues). The C-terminal (CTD) stretch occupies residues 838 to 988 (HLDLDGLPEI…ETELAEEGEE (151 aa)).

Interacts with FCGR1A. Interacts with TRPC4. Interacts (via CTD domain) with FKBP2. Interacts with NUMA1; this interaction is negatively regulated by CDK1 during metaphase and promotes anaphase-specific localization of NUMA1 in symmetrically dividing cells. Widely expressed.

It localises to the cytoplasm. The protein resides in the cytoskeleton. Its subcellular location is the cell cortex. The protein localises to the cell membrane. Functionally, required for dynein-dynactin complex and NUMA1 recruitment at the mitotic cell cortex during anaphase. The sequence is that of Band 4.1-like protein 2 from Mus musculus (Mouse).